The sequence spans 485 residues: Protein hunchback (485 aa).

A disordered region spans residues 1–77; it reads TSSTARKTPE…EEDDDIRTPK (77 aa). Over residues 16-37 the composition is skewed to polar residues; it reads QDQNQLLKTPIQTNGNQQSTFD. Over residues 59–72 the composition is skewed to acidic residues; the sequence is ADVDDENDAEEDDD. C2H2-type zinc fingers lie at residues 87 to 109, 116 to 138, 144 to 166, and 172 to 196; these read YKCKQCDFIAVTKLSFWEHNRIH, LKCQKCPFITEYKHHLEYHLRNH, FQCKQCNYSCVNKSMLNSHMKSH, and YRCKDCNYATKYCHSLKLHLRKYSH. Disordered regions lie at residues 229-270, 318-361, and 398-422; these read KDEG…PPSS, NGWQ…QVKH, and PKPVQLQLPTSSTTTPLKTTSEDDS. The segment covering 257–270 has biased composition (polar residues); the sequence is NFEQSQHVPTPPSS. Residues 325–335 are compositionally biased toward acidic residues; it reads NCNEEETPEKE. Residues 345-358 show a composition bias toward polar residues; the sequence is DLSSNPSTPSTVSQ. The span at 402–416 shows a compositional bias: low complexity; sequence QLQLPTSSTTTPLKT. 2 C2H2-type zinc fingers span residues 432 to 454 and 460 to 484; these read YECKFCDISFKHAVLYTIHMGYH and FKCNACGKKCEDRVAFFLHIARDAH.

It belongs to the hunchback C2H2-type zinc-finger protein family.

Its subcellular location is the nucleus. Gap class segmentation protein that controls development of head structures. This chain is Protein hunchback (hb), found in Clogmia albipunctata (Mothmidge).